We begin with the raw amino-acid sequence, 83 residues long: Small ribosomal subunit protein uS17 (83 aa).

This sequence belongs to the universal ribosomal protein uS17 family. In terms of assembly, part of the 30S ribosomal subunit.

Functionally, one of the primary rRNA binding proteins, it binds specifically to the 5'-end of 16S ribosomal RNA. This is Small ribosomal subunit protein uS17 from Pseudoalteromonas atlantica (strain T6c / ATCC BAA-1087).